Reading from the N-terminus, the 280-residue chain is Lysosome-associated membrane glycoprotein 5 (280 aa).

An N-terminal signal peptide occupies residues 1–29 (MDLQGRGVPSIDRLRVLLMLFHTMAQIMA). Topologically, residues 30 to 235 (EQEVENLSGL…PVDEREQLEE (206 aa)) are extracellular. Residues asparagine 35, asparagine 53, and asparagine 127 are each glycosylated (N-linked (GlcNAc...) asparagine). The helical transmembrane segment at 236–256 (TLPLILGLILGLVIMVTLAIY) threads the bilayer. Residues 257 to 280 (HVHHKMTANQVQIPRDRSQYKHMG) are Cytoplasmic-facing.

This sequence belongs to the LAMP family. Post-translationally, glycosylated. Expressed in plasmocytoid dendritic cells. Expressed in suprabasal skin keratinocytes and squamous cells (at protein level). Expressed in the brain and weakly in spleen and skin. Expressed in plasmocytoid dendritic cells.

It localises to the cell membrane. The protein resides in the cytoplasmic vesicle. It is found in the secretory vesicle. Its subcellular location is the synaptic vesicle membrane. The protein localises to the endoplasmic reticulum-Golgi intermediate compartment membrane. It localises to the endosome membrane. The protein resides in the cytoplasmic vesicle membrane. It is found in the cell projection. Its subcellular location is the dendrite. The protein localises to the growth cone membrane. It localises to the early endosome membrane. The protein resides in the recycling endosome. Plays a role in short-term synaptic plasticity in a subset of GABAergic neurons in the brain. This chain is Lysosome-associated membrane glycoprotein 5 (LAMP5), found in Homo sapiens (Human).